We begin with the raw amino-acid sequence, 597 residues long: uncharacterized protein (597 aa).

5 consecutive transmembrane segments (helical) span residues 37–57 (VLII…LWPV), 67–87 (IFWL…LQFA), 109–129 (GGER…YAAI), 134–154 (SVSL…FIAW), and 162–182 (ALMT…LAIV). Residues 393–597 (HQLARDLHDG…QITIFVPIES (205 aa)) enclose the Histidine kinase domain.

The protein localises to the cell membrane. This is an uncharacterized protein from Chloroflexus aurantiacus (strain ATCC 29366 / DSM 635 / J-10-fl).